Consider the following 322-residue polypeptide: tRNA-modifying protein YgfZ (322 aa).

W182 is a folate binding site.

Belongs to the tRNA-modifying YgfZ family.

The protein resides in the cytoplasm. Its function is as follows. Folate-binding protein involved in regulating the level of ATP-DnaA and in the modification of some tRNAs. It is probably a key factor in regulatory networks that act via tRNA modification, such as initiation of chromosomal replication. The protein is tRNA-modifying protein YgfZ of Vibrio campbellii (strain ATCC BAA-1116).